The primary structure comprises 196 residues: Large ribosomal subunit protein bL9 (196 aa).

It belongs to the bacterial ribosomal protein bL9 family.

In terms of biological role, binds to the 23S rRNA. This chain is Large ribosomal subunit protein bL9, found in Bradyrhizobium sp. (strain ORS 278).